The following is a 256-amino-acid chain: Ubiquinone/menaquinone biosynthesis C-methyltransferase UbiE (256 aa).

Residues threonine 79, aspartate 100, and 128-129 (DA) each bind S-adenosyl-L-methionine.

The protein belongs to the class I-like SAM-binding methyltransferase superfamily. MenG/UbiE family.

The catalysed reaction is a 2-demethylmenaquinol + S-adenosyl-L-methionine = a menaquinol + S-adenosyl-L-homocysteine + H(+). The enzyme catalyses a 2-methoxy-6-(all-trans-polyprenyl)benzene-1,4-diol + S-adenosyl-L-methionine = a 5-methoxy-2-methyl-3-(all-trans-polyprenyl)benzene-1,4-diol + S-adenosyl-L-homocysteine + H(+). Its pathway is quinol/quinone metabolism; menaquinone biosynthesis; menaquinol from 1,4-dihydroxy-2-naphthoate: step 2/2. The protein operates within cofactor biosynthesis; ubiquinone biosynthesis. In terms of biological role, methyltransferase required for the conversion of demethylmenaquinol (DMKH2) to menaquinol (MKH2) and the conversion of 2-polyprenyl-6-methoxy-1,4-benzoquinol (DDMQH2) to 2-polyprenyl-3-methyl-6-methoxy-1,4-benzoquinol (DMQH2). In Pseudomonas aeruginosa (strain LESB58), this protein is Ubiquinone/menaquinone biosynthesis C-methyltransferase UbiE.